The sequence spans 434 residues: Methylenetetrahydrofolate--tRNA-(uracil-5-)-methyltransferase TrmFO (434 aa).

Residue 9 to 14 (GAGLAG) coordinates FAD.

This sequence belongs to the MnmG family. TrmFO subfamily. FAD is required as a cofactor.

It localises to the cytoplasm. The enzyme catalyses uridine(54) in tRNA + (6R)-5,10-methylene-5,6,7,8-tetrahydrofolate + NADH + H(+) = 5-methyluridine(54) in tRNA + (6S)-5,6,7,8-tetrahydrofolate + NAD(+). It carries out the reaction uridine(54) in tRNA + (6R)-5,10-methylene-5,6,7,8-tetrahydrofolate + NADPH + H(+) = 5-methyluridine(54) in tRNA + (6S)-5,6,7,8-tetrahydrofolate + NADP(+). Catalyzes the folate-dependent formation of 5-methyl-uridine at position 54 (M-5-U54) in all tRNAs. This is Methylenetetrahydrofolate--tRNA-(uracil-5-)-methyltransferase TrmFO from Bacillus pumilus (strain SAFR-032).